We begin with the raw amino-acid sequence, 443 residues long: UDP-N-acetylmuramate--L-alanine ligase (443 aa).

111 to 117 (GAHGKTS) is a binding site for ATP.

Belongs to the MurCDEF family.

The protein localises to the cytoplasm. The enzyme catalyses UDP-N-acetyl-alpha-D-muramate + L-alanine + ATP = UDP-N-acetyl-alpha-D-muramoyl-L-alanine + ADP + phosphate + H(+). It participates in cell wall biogenesis; peptidoglycan biosynthesis. Its function is as follows. Cell wall formation. The polypeptide is UDP-N-acetylmuramate--L-alanine ligase (Ligilactobacillus salivarius (strain UCC118) (Lactobacillus salivarius)).